Reading from the N-terminus, the 264-residue chain is Thymidylate synthase (264 aa).

DUMP is bound at residue arginine 21. Histidine 51 contributes to the (6R)-5,10-methylene-5,6,7,8-tetrahydrofolate binding site. DUMP is bound at residue 126–127 (RR). Cysteine 146 serves as the catalytic Nucleophile. DUMP is bound by residues 166–169 (RSVD), asparagine 177, and 207–209 (HLY). (6R)-5,10-methylene-5,6,7,8-tetrahydrofolate is bound at residue aspartate 169. Residue alanine 263 participates in (6R)-5,10-methylene-5,6,7,8-tetrahydrofolate binding.

Belongs to the thymidylate synthase family. Bacterial-type ThyA subfamily. In terms of assembly, homodimer.

It is found in the cytoplasm. It carries out the reaction dUMP + (6R)-5,10-methylene-5,6,7,8-tetrahydrofolate = 7,8-dihydrofolate + dTMP. It participates in pyrimidine metabolism; dTTP biosynthesis. Functionally, catalyzes the reductive methylation of 2'-deoxyuridine-5'-monophosphate (dUMP) to 2'-deoxythymidine-5'-monophosphate (dTMP) while utilizing 5,10-methylenetetrahydrofolate (mTHF) as the methyl donor and reductant in the reaction, yielding dihydrofolate (DHF) as a by-product. This enzymatic reaction provides an intracellular de novo source of dTMP, an essential precursor for DNA biosynthesis. The protein is Thymidylate synthase of Geobacillus thermodenitrificans (strain NG80-2).